Consider the following 316-residue polypeptide: Cytochrome c biogenesis protein CcsA (316 aa).

Transmembrane regions (helical) follow at residues I9–L29, F39–Q61, L70–V90, I94–L114, L143–F163, T224–N244, E257–L271, and S289–L309.

It belongs to the CcmF/CycK/Ccl1/NrfE/CcsA family. May interact with Ccs1.

The protein resides in the plastid. The protein localises to the chloroplast thylakoid membrane. Its function is as follows. Required during biogenesis of c-type cytochromes (cytochrome c6 and cytochrome f) at the step of heme attachment. The chain is Cytochrome c biogenesis protein CcsA from Adiantum capillus-veneris (Maidenhair fern).